A 493-amino-acid polypeptide reads, in one-letter code: Glutamyl-tRNA(Gln) amidotransferase subunit A (493 aa).

Catalysis depends on charge relay system residues Lys78 and Ser158. Catalysis depends on Ser182, which acts as the Acyl-ester intermediate.

It belongs to the amidase family. GatA subfamily. In terms of assembly, heterotrimer of A, B and C subunits.

The catalysed reaction is L-glutamyl-tRNA(Gln) + L-glutamine + ATP + H2O = L-glutaminyl-tRNA(Gln) + L-glutamate + ADP + phosphate + H(+). Functionally, allows the formation of correctly charged Gln-tRNA(Gln) through the transamidation of misacylated Glu-tRNA(Gln) in organisms which lack glutaminyl-tRNA synthetase. The reaction takes place in the presence of glutamine and ATP through an activated gamma-phospho-Glu-tRNA(Gln). The polypeptide is Glutamyl-tRNA(Gln) amidotransferase subunit A (Methylorubrum extorquens (strain PA1) (Methylobacterium extorquens)).